The chain runs to 122 residues: Ribonuclease pancreatic (122 aa).

Substrate contacts are provided by K6 and R9. The active-site Proton acceptor is H11. Intrachain disulfides connect C25–C83, C39–C94, C57–C109, and C64–C71. Residues 40–44 (KPVNT), K65, and R84 contribute to the substrate site. H117 acts as the Proton donor in catalysis.

It belongs to the pancreatic ribonuclease family. As to quaternary structure, monomer. Interacts with and forms tight 1:1 complexes with RNH1. Dimerization of two such complexes may occur. Interaction with RNH1 inhibits this protein. Pancreas.

The protein localises to the secreted. It carries out the reaction an [RNA] containing cytidine + H2O = an [RNA]-3'-cytidine-3'-phosphate + a 5'-hydroxy-ribonucleotide-3'-[RNA].. The enzyme catalyses an [RNA] containing uridine + H2O = an [RNA]-3'-uridine-3'-phosphate + a 5'-hydroxy-ribonucleotide-3'-[RNA].. Its function is as follows. Endonuclease that catalyzes the cleavage of RNA on the 3' side of pyrimidine nucleotides. Acts on single-stranded and double-stranded RNA. The sequence is that of Ribonuclease pancreatic from Notamacropus rufogriseus (Red-necked wallaby).